The sequence spans 289 residues: uncharacterized protein (289 aa).

Residues 25–66 form a disordered region; it reads GGSGDSQSAHTPSTSIHTQNNSTPNKNTSTPPVNVSNANNLE. Residues 33–43 show a composition bias toward polar residues; the sequence is AHTPSTSIHTQ. Residues 44–59 are compositionally biased toward low complexity; sequence NNSTPNKNTSTPPVNV.

This is an uncharacterized protein from Haemophilus influenzae (strain ATCC 51907 / DSM 11121 / KW20 / Rd).